The following is a 41-amino-acid chain: Photosystem I reaction center subunit IX (41 aa).

Residues 7 to 27 form a helical membrane-spanning segment; it reads YLSTAPVLATVWMIITAGILI.

It belongs to the PsaJ family.

The protein localises to the cellular thylakoid membrane. Functionally, may help in the organization of the PsaE and PsaF subunits. This Trichodesmium erythraeum (strain IMS101) protein is Photosystem I reaction center subunit IX.